The primary structure comprises 339 residues: Biotin synthase (339 aa).

Residues 47–276 enclose the Radical SAM core domain; it reads FYGKKVKLNM…SKEIRISGGR (230 aa). [4Fe-4S] cluster contacts are provided by C65, C69, and C72. Positions 109, 141, 201, and 271 each coordinate [2Fe-2S] cluster.

It belongs to the radical SAM superfamily. Biotin synthase family. As to quaternary structure, homodimer. Requires [4Fe-4S] cluster as cofactor. It depends on [2Fe-2S] cluster as a cofactor.

The enzyme catalyses (4R,5S)-dethiobiotin + (sulfur carrier)-SH + 2 reduced [2Fe-2S]-[ferredoxin] + 2 S-adenosyl-L-methionine = (sulfur carrier)-H + biotin + 2 5'-deoxyadenosine + 2 L-methionine + 2 oxidized [2Fe-2S]-[ferredoxin]. It participates in cofactor biosynthesis; biotin biosynthesis; biotin from 7,8-diaminononanoate: step 2/2. Catalyzes the conversion of dethiobiotin (DTB) to biotin by the insertion of a sulfur atom into dethiobiotin via a radical-based mechanism. In Bacillus velezensis (strain DSM 23117 / BGSC 10A6 / LMG 26770 / FZB42) (Bacillus amyloliquefaciens subsp. plantarum), this protein is Biotin synthase.